The following is a 382-amino-acid chain: PqqA peptide cyclase (382 aa).

Residues 8–223 (VKPPLWLLAE…VHRYREKMAA (216 aa)) enclose the Radical SAM core domain. Residues cysteine 22, cysteine 26, and cysteine 29 each contribute to the [4Fe-4S] cluster site.

It belongs to the radical SAM superfamily. PqqE family. Interacts with PqqD. The interaction is necessary for activity of PqqE. Requires [4Fe-4S] cluster as cofactor.

The enzyme catalyses [PQQ precursor protein] + S-adenosyl-L-methionine = E-Y cross-linked-[PQQ precursor protein] + 5'-deoxyadenosine + L-methionine + H(+). The protein operates within cofactor biosynthesis; pyrroloquinoline quinone biosynthesis. Its function is as follows. Catalyzes the cross-linking of a glutamate residue and a tyrosine residue in the PqqA protein as part of the biosynthesis of pyrroloquinoline quinone (PQQ). This is PqqA peptide cyclase from Erwinia tasmaniensis (strain DSM 17950 / CFBP 7177 / CIP 109463 / NCPPB 4357 / Et1/99).